A 770-amino-acid polypeptide reads, in one-letter code: Probable methyltransferase PMT25 (770 aa).

The Cytoplasmic segment spans residues 1 to 17; the sequence is MAMGKYSRVDGKKSSSY. A helical; Signal-anchor for type II membrane protein membrane pass occupies residues 18–38; it reads GLTITIVLLLSLCLVGTWMFM. At 39–770 the chain is on the lumenal side; sequence SSWSAPADSA…ETETIKSAIA (732 aa). The segment at 44 to 238 is disordered; that stretch reads PADSAGYSST…SSISKDQSSY (195 aa). A compositionally biased stretch (basic and acidic residues) spans 55 to 79; the sequence is TAKDVSKNDLRKEEGDRDPKNFSDE. Asparagine 75 and asparagine 107 each carry an N-linked (GlcNAc...) asparagine glycan. The segment covering 92–109 has biased composition (polar residues); sequence QVKTDSENSAEGNQVNES. Composition is skewed to basic and acidic residues over residues 110-124 and 131-177; these read SGEK…KESD and DGEK…KAEE. N-linked (GlcNAc...) asparagine glycans are attached at residues asparagine 163 and asparagine 178. 2 stretches are compositionally biased toward polar residues: residues 205–220 and 227–238; these read ESST…LVES and QQSSISKDQSSY. N-linked (GlcNAc...) asparagine glycans are attached at residues asparagine 244 and asparagine 363.

Belongs to the methyltransferase superfamily.

It is found in the golgi apparatus membrane. The polypeptide is Probable methyltransferase PMT25 (Arabidopsis thaliana (Mouse-ear cress)).